The primary structure comprises 291 residues: uncharacterized protein (291 aa).

The disordered stretch occupies residues threonine 77–proline 140. The span at proline 125–proline 134 shows a compositional bias: pro residues.

This is an uncharacterized protein from Synechocystis sp. (strain ATCC 27184 / PCC 6803 / Kazusa).